A 73-amino-acid chain; its full sequence is Translation initiation factor IF-1 (73 aa).

Positions 1 to 72 (MAKEDVIEVE…SRGRITYRYR (72 aa)) constitute an S1-like domain.

Belongs to the IF-1 family. Component of the 30S ribosomal translation pre-initiation complex which assembles on the 30S ribosome in the order IF-2 and IF-3, IF-1 and N-formylmethionyl-tRNA(fMet); mRNA recruitment can occur at any time during PIC assembly.

It localises to the cytoplasm. Functionally, one of the essential components for the initiation of protein synthesis. Stabilizes the binding of IF-2 and IF-3 on the 30S subunit to which N-formylmethionyl-tRNA(fMet) subsequently binds. Helps modulate mRNA selection, yielding the 30S pre-initiation complex (PIC). Upon addition of the 50S ribosomal subunit IF-1, IF-2 and IF-3 are released leaving the mature 70S translation initiation complex. The protein is Translation initiation factor IF-1 of Rubrobacter xylanophilus (strain DSM 9941 / JCM 11954 / NBRC 16129 / PRD-1).